A 115-amino-acid chain; its full sequence is MEKAYRIKKNEDFQKIYKNGKSVANRQFIIYRQKNSENEHFRLGISVSKKIGNAVTRNRIKRAIRESFTKHKEDIIKDDFIVIARQPSKEMTTNEINKSLEHVMKIAKGFNKRIT.

Belongs to the RnpA family. Consists of a catalytic RNA component (M1 or rnpB) and a protein subunit.

It carries out the reaction Endonucleolytic cleavage of RNA, removing 5'-extranucleotides from tRNA precursor.. Functionally, RNaseP catalyzes the removal of the 5'-leader sequence from pre-tRNA to produce the mature 5'-terminus. It can also cleave other RNA substrates such as 4.5S RNA. The protein component plays an auxiliary but essential role in vivo by binding to the 5'-leader sequence and broadening the substrate specificity of the ribozyme. The polypeptide is Ribonuclease P protein component (Macrococcus caseolyticus (strain JCSC5402) (Macrococcoides caseolyticum)).